We begin with the raw amino-acid sequence, 258 residues long: Indole-3-glycerol phosphate synthase (258 aa).

This sequence belongs to the TrpC family.

The enzyme catalyses 1-(2-carboxyphenylamino)-1-deoxy-D-ribulose 5-phosphate + H(+) = (1S,2R)-1-C-(indol-3-yl)glycerol 3-phosphate + CO2 + H2O. It functions in the pathway amino-acid biosynthesis; L-tryptophan biosynthesis; L-tryptophan from chorismate: step 4/5. The protein is Indole-3-glycerol phosphate synthase of Campylobacter jejuni subsp. doylei (strain ATCC BAA-1458 / RM4099 / 269.97).